The following is a 121-amino-acid chain: Large ribosomal subunit protein bL12 (121 aa).

This sequence belongs to the bacterial ribosomal protein bL12 family. As to quaternary structure, homodimer. Part of the ribosomal stalk of the 50S ribosomal subunit. Forms a multimeric L10(L12)X complex, where L10 forms an elongated spine to which 2 to 4 L12 dimers bind in a sequential fashion. Binds GTP-bound translation factors.

Forms part of the ribosomal stalk which helps the ribosome interact with GTP-bound translation factors. Is thus essential for accurate translation. This Lactococcus lactis subsp. lactis (strain IL1403) (Streptococcus lactis) protein is Large ribosomal subunit protein bL12.